The following is a 204-amino-acid chain: uncharacterized protein (204 aa).

Residues 63–83 (SLLLSMVASVTAAGGNAAIVG) traverse the membrane as a helical segment.

The protein resides in the membrane. This is an uncharacterized protein from Mycobacterium tuberculosis (strain ATCC 25618 / H37Rv).